The chain runs to 396 residues: L-lactate dehydrogenase (396 aa).

Residues M1–G380 form the FMN hydroxy acid dehydrogenase domain. Y24 is a binding site for substrate. Residues S106 and Q127 each coordinate FMN. Y129 lines the substrate pocket. Residue T155 participates in FMN binding. R164 contacts substrate. K251 contacts FMN. H275 (proton acceptor) is an active-site residue. R278 lines the substrate pocket. D306–R330 contributes to the FMN binding site.

This sequence belongs to the FMN-dependent alpha-hydroxy acid dehydrogenase family. The cofactor is FMN.

The protein localises to the cell inner membrane. It carries out the reaction (S)-lactate + A = pyruvate + AH2. In terms of biological role, catalyzes the conversion of L-lactate to pyruvate. Is coupled to the respiratory chain. This chain is L-lactate dehydrogenase, found in Salmonella heidelberg (strain SL476).